A 184-amino-acid chain; its full sequence is MMTPENDEEQTSVFSATVYGDKIQGKNKRKRVIGICIRISMVISLLSMITMSAFLIVRLNQCMSANEAAITDATAVAAALSTHRKVASSTTQYKHQESCNGLYYQGSCYIFHSDYQLFSDAKANCATESSTLPNKSDVLTTWLIDYVEDTWGSDGNPITKTTTDYQDSDVSQEVRKYFCVKTMN.

Residues 1-33 lie on the Intravirion side of the membrane; the sequence is MMTPENDEEQTSVFSATVYGDKIQGKNKRKRVI. The chain crosses the membrane as a helical span at residues 34–56; sequence GICIRISMVISLLSMITMSAFLI. Over 57–184 the chain is Virion surface; it reads VRLNQCMSAN…RKYFCVKTMN (128 aa). Residues 98-184 form a C-type lectin-like domain region; it reads SCNGLYYQGS…RKYFCVKTMN (87 aa). The N-linked (GlcNAc...) asparagine; by host glycan is linked to asparagine 134.

This sequence belongs to the orthopoxvirus OPG161 family. In terms of assembly, homodimer, disulfide-linked. Interacts with protein OPG190. Interacts (via C-terminus) with protein OPG164. Interacts with OPG162.

It is found in the virion membrane. The protein localises to the host membrane. Its function is as follows. Forms a complex with OPG162 and OPG190 to coordinate the incorporation of OPG164 into wrapped enveloped virion (EV) membranes and, subsequently, the production of actin tails. Therefore plays an essential role in efficient cell-to-cell spread of viral particles. This Homo sapiens (Human) protein is Protein OPG161 (OPG161).